A 244-amino-acid chain; its full sequence is Putative lipoprotein LprA (244 aa).

A signal peptide spans 1 to 24; the sequence is MKHPPCSVVAAATAILAVVLAIGG. The N-palmitoyl cysteine moiety is linked to residue Cys-25. Cys-25 is lipidated: S-diacylglycerol cysteine.

The protein belongs to the LppX/LprAFG lipoprotein family.

The protein localises to the cell membrane. The protein is Putative lipoprotein LprA (lprA) of Mycobacterium bovis (strain ATCC BAA-935 / AF2122/97).